The chain runs to 837 residues: Telomere length regulation protein TEL2 homolog (837 aa).

The residue at position 1 (Met-1) is an N-acetylmethionine. Hydroxyproline is present on residues Pro-374, Pro-419, and Pro-422. The tract at residues 444 to 472 (QPAGDGASEAGTSLVPATAEPPAETPAEI) is disordered. A Phosphoserine modification is found at Ser-456. Positions 459-471 (PATAEPPAETPAE) are enriched in low complexity. Ser-485 is modified (phosphoserine; by CK2). Residues Ser-487 and Ser-491 each carry the phosphoserine modification. The segment at 627–651 (GCLGRTPQPGSPSPNTPCLPEAAVS) is disordered. Ser-688 and Ser-836 each carry phosphoserine.

The protein belongs to the TEL2 family. As to quaternary structure, component of the TTT complex composed of TELO2, TTI1 and TTI2. Interacts with ATM, ATR, MTOR, PRKDC, RUVBL2, TTI1, TTI2, SMG1 and TRRAP. Component of the mTORC1 and mTORC2 complexes. Interacts (phosphorylated form) with PIH1D1 which mediates interaction of TELO2 with the R2TP complex composed of RUVBL1, RUVBL2, PIH1D1, and RPAP3. Hydroxylation by PHD3 is required for a proper interaction with ATR, and activation of the ATR/CHK1/p53 pathway following DNA damage. Post-translationally, phosphorylated at Ser-485 by CK2 following growth factor deprivation, leading to its subsequent ubiquitination by the SCF(FBXO9) complex. Phosphorylation by CK2 only takes place when TELO2 is bound to mTORC1, not mTORC2; leading to selective ubiquitination of mTORC1-associated protein. In terms of processing, ubiquitinated by the SCF(FBXO9) complex following phosphorylation by CK2 in response to growth factor deprivation, leading to its degradation by the proteasome. Only mTORC1-associated protein is ubiquitinated and degraded, leading to selective inactivation of mTORC1 to restrain cell growth and protein translation, while mTORC2 is activated due to the relief of feedback inhibition by mTORC1.

The protein resides in the cytoplasm. It is found in the membrane. It localises to the nucleus. Its subcellular location is the chromosome. The protein localises to the telomere. Functionally, regulator of the DNA damage response (DDR). Part of the TTT complex that is required to stabilize protein levels of the phosphatidylinositol 3-kinase-related protein kinase (PIKK) family proteins. The TTT complex is involved in the cellular resistance to DNA damage stresses, like ionizing radiation (IR), ultraviolet (UV) and mitomycin C (MMC). Together with the TTT complex and HSP90 may participate in the proper folding of newly synthesized PIKKs. Promotes assembly, stabilizes and maintains the activity of mTORC1 and mTORC2 complexes, which regulate cell growth and survival in response to nutrient and hormonal signals. May be involved in telomere length regulation. The protein is Telomere length regulation protein TEL2 homolog (TELO2) of Homo sapiens (Human).